Here is a 245-residue protein sequence, read N- to C-terminus: Thioredoxin-like 1-2, chloroplastic (245 aa).

A chloroplast-targeting transit peptide spans 1–92 (MDAISSLGTN…TNHNMLEIQS (92 aa)). The region spanning 93–194 (ANHLVDSLLN…FKKALDKHGS (102 aa)) is the Thioredoxin domain. Active-site nucleophile residues include Cys117 and Cys120. Cys117 and Cys120 are oxidised to a cystine.

This sequence belongs to the thioredoxin family.

The protein resides in the plastid. It localises to the chloroplast. Its function is as follows. Probable thiol-disulfide oxidoreductase that may participate in various redox reactions. The polypeptide is Thioredoxin-like 1-2, chloroplastic (Arabidopsis thaliana (Mouse-ear cress)).